The sequence spans 91 residues: Large ribosomal subunit protein eL31 (91 aa).

This sequence belongs to the eukaryotic ribosomal protein eL31 family.

This is Large ribosomal subunit protein eL31 from Pyrobaculum calidifontis (strain DSM 21063 / JCM 11548 / VA1).